The chain runs to 411 residues: GPI-anchor transamidase (411 aa).

The N-terminal stretch at 1–22 is a signal peptide; it reads MRIAMHLPLLLLYIFLLPLSGA. The Lumenal portion of the chain corresponds to 23 to 376; sequence NNTDAAHEVI…DIDSNECFFT (354 aa). Residues His157 and Cys199 contribute to the active site. Residues Asn256 and Asn346 are each glycosylated (N-linked (GlcNAc...) asparagine). The chain crosses the membrane as a helical span at residues 377 to 397; that stretch reads SFKQSATIILALIVTILWFML. Residues 398 to 411 are Cytoplasmic-facing; the sequence is RGNTAKATYDLYTN.

This sequence belongs to the peptidase C13 family. As to quaternary structure, forms a complex with CDC91, GPI16, GPI17 and GAA1. The disulfide bond between GPI8 and GPI16 is important for normal enzyme activity.

The protein localises to the endoplasmic reticulum membrane. It participates in glycolipid biosynthesis; glycosylphosphatidylinositol-anchor biosynthesis. Mediates GPI anchoring in the endoplasmic reticulum, by replacing a protein's C-terminal GPI attachment signal peptide with a pre-assembled GPI. During this transamidation reaction, the GPI transamidase forms a carbonyl intermediate with the substrate protein. The polypeptide is GPI-anchor transamidase (GPI8) (Saccharomyces cerevisiae (strain ATCC 204508 / S288c) (Baker's yeast)).